The sequence spans 196 residues: MNDAINHTACETLFTQARTHNGWLDKPVSDAQLQAIWDLMKMGPTSANCSPARIVFVRSAEGKEKLGPTLSSGNLQKTMQAPVTAIVAWDRAFYDRLPTLFPHGDARSWFTSSPQLAEETAFRNSSLQAAYLIFACRALGLDTGPMSGFDREKVDAAFFADNGWKSNLLVNIGYGDPGKLYGRLPRLSFDEACLLA.

This sequence belongs to the nitroreductase family. HadB/RutE subfamily. The cofactor is FMN.

It catalyses the reaction 3-hydroxypropanoate + NADP(+) = 3-oxopropanoate + NADPH + H(+). In terms of biological role, may reduce toxic product malonic semialdehyde to 3-hydroxypropionic acid, which is excreted. This chain is Probable malonic semialdehyde reductase RutE, found in Klebsiella pneumoniae (strain 342).